The sequence spans 388 residues: Processive diacylglycerol beta-glucosyltransferase (388 aa).

The protein belongs to the glycosyltransferase 28 family. UgtP subfamily.

It localises to the cell membrane. The enzyme catalyses a 1,2-diacyl-3-O-(beta-D-glucopyranosyl)-sn-glycerol + UDP-alpha-D-glucose = a 1,2-diacyl-3-O-(beta-D-Glc-(1-&gt;6)-beta-D-Glc)-sn-glycerol + UDP + H(+). The catalysed reaction is a 1,2-diacyl-3-O-(beta-D-Glc-(1-&gt;6)-beta-D-Glc)-sn-glycerol + UDP-alpha-D-glucose = a 1,2-diacyl-3-O-(beta-D-Glc-(1-&gt;6)-beta-D-Glc-(1-&gt;6)-beta-D-Glc)-sn-glycerol + UDP + H(+). It carries out the reaction a 1,2-diacyl-sn-glycerol + UDP-alpha-D-glucose = a 1,2-diacyl-3-O-(beta-D-glucopyranosyl)-sn-glycerol + UDP + H(+). Its pathway is glycolipid metabolism; diglucosyl-diacylglycerol biosynthesis. In terms of biological role, processive glucosyltransferase involved in the biosynthesis of both the bilayer- and non-bilayer-forming membrane glucolipids. Is able to successively transfer up to three glucosyl residues to diacylglycerol (DAG), thereby catalyzing the formation of beta-monoglucosyl-DAG (3-O-(beta-D-glucopyranosyl)-1,2-diacyl-sn-glycerol), beta-diglucosyl-DAG (3-O-(beta-D-glucopyranosyl-beta-(1-&gt;6)-D-glucopyranosyl)-1,2-diacyl-sn-glycerol) and beta-triglucosyl-DAG (3-O-(beta-D-glucopyranosyl-beta-(1-&gt;6)-D-glucopyranosyl-beta-(1-&gt;6)-D-glucopyranosyl)-1,2-diacyl-sn-glycerol). Beta-diglucosyl-DAG is the predominant glycolipid found in Bacillales and is also used as a membrane anchor for lipoteichoic acid (LTA). This is Processive diacylglycerol beta-glucosyltransferase from Bacillus cytotoxicus (strain DSM 22905 / CIP 110041 / 391-98 / NVH 391-98).